Here is a 253-residue protein sequence, read N- to C-terminus: Ice-binding protein (253 aa).

A signal peptide spans 1–27; that stretch reads MKTLISNSKKVLIPLIMGSIFAGNVMA. A disulfide bridge links Cys-75 with Cys-93. Short sequence motifs (ice-binding site motif (T-A/G-X-T/N)) lie at residues 220–223 and 232–235; these read TGTT and TAVT.

Belongs to the ice-binding protein family.

It is found in the secreted. Binds to the surface of ice crystals and inhibits their growth. Has ice recrystallization inhibition (RI) activity (the ability to prevent the formation of larger grains of ice at the expense of smaller grains), which may protect membranes from freezing injury. Has high thermal hysteresis (TH) activity, which is the ability to lower the freezing point of an aqueous solution below its melting point, and thus the freezing of the cell fluid can be prevented protecting the organism from ice damage. The TH activity of this protein is 3.8 degrees Celsius at 14 mM. The protein is Ice-binding protein of Colwellia sp.